A 489-amino-acid polypeptide reads, in one-letter code: MTFRNCVAVDLGASSGRVMLARYERECRSLTLREIHRFNNGLHSQNGYVTWDVDSLESAIRLGLNKVCEEGIRIDSIGIDTWGVDFVLLDQQGQRVGLPVAYRDSRTNGLMPQAQQQLGKRDIYQRSGIQFLPFNTLYQLRALTEQQPELIPHIAHALLMPDYFSYRLTGKMNWEYTNATTTQLVNINSDDWDESLLAWSGANKAWFGRPTHPGNVIGHWICPQGNEIPVVAVASHDTASAVIASPLNGSRAAYLSSGTWSLMGFESQTPFTNDTALAANITNEGGAEGRYRVLKNIMGLWLLQRVLQERQINDLPALIAATQALPACRFIINPNDDRFINPDEMCSEIQAACRETAQPIPGSDAELARCIFDSLALLYADVLHELAQLRGEDFSQLHIVGGGCQNTLLNQLCADACGIRVIAGPVEASTLGNIGIELMTLDELNNVDDFRQVVSTTANLTTFTPNPDSEIAHYVAQIHSTRQTKELCA.

13–17 (ASSGR) contributes to the ATP binding site. An intrachain disulfide couples cysteine 68 to cysteine 222. Substrate is bound by residues glycine 83 and 236–238 (HDT). The Proton acceptor role is filled by aspartate 237. An ATP-binding site is contributed by threonine 259. Substrate is bound at residue asparagine 296. Residue glutamine 304 coordinates ATP. Cysteine 353 and cysteine 370 are disulfide-bonded. Glycine 402 provides a ligand contact to ATP. An intrachain disulfide couples cysteine 413 to cysteine 417.

This sequence belongs to the rhamnulokinase family. It depends on Mg(2+) as a cofactor.

The enzyme catalyses L-rhamnulose + ATP = L-rhamnulose 1-phosphate + ADP + H(+). It participates in carbohydrate degradation; L-rhamnose degradation; glycerone phosphate from L-rhamnose: step 2/3. Involved in the catabolism of L-rhamnose (6-deoxy-L-mannose). Catalyzes the transfer of the gamma-phosphate group from ATP to the 1-hydroxyl group of L-rhamnulose to yield L-rhamnulose 1-phosphate. This is Rhamnulokinase from Shigella flexneri serotype 5b (strain 8401).